A 946-amino-acid chain; its full sequence is Serine/threonine-protein kinase PLK4 (946 aa).

The Protein kinase domain occupies 12-265 (FKVLNLLGKG…LSSVLDHAFM (254 aa)). ATP is bound by residues 18–26 (LGKGSFACV) and Lys-41. Asp-136 functions as the Proton acceptor in the catalytic mechanism. The disordered stretch occupies residues 330-395 (HPAERSNGGS…TYGKPSSFSE (66 aa)). Over residues 378 to 394 (RSGTSQSQTYGKPSSFS) the composition is skewed to polar residues. The Cryptic POLO box 1 (CPB1) domain occupies 566–679 (TLRSIISPLN…AKFIQLVRSK (114 aa)). The 113-residue stretch at 680-792 (MPKVTYYTRY…GRRPAITESP (113 aa)) folds into the Cryptic POLO box 2 (CPB2) domain. The interval 789-828 (TESPRTQLTVDSARERKDEQSSANRVLHSSATSPPQIPNI) is disordered. A compositionally biased stretch (polar residues) spans 809 to 828 (SSANRVLHSSATSPPQIPNI). Residues 864 to 942 (QVLKSVFVEN…LSSILMLFAS (79 aa)) enclose the POLO box domain.

The protein belongs to the protein kinase superfamily. Ser/Thr protein kinase family. CDC5/Polo subfamily. As to quaternary structure, homodimer. Ubiquitinated; leading to its degradation by the proteasome.

The protein localises to the cytoplasm. It is found in the cytoskeleton. The protein resides in the microtubule organizing center. Its subcellular location is the centrosome. It localises to the centriole. The enzyme catalyses L-seryl-[protein] + ATP = O-phospho-L-seryl-[protein] + ADP + H(+). The catalysed reaction is L-threonyl-[protein] + ATP = O-phospho-L-threonyl-[protein] + ADP + H(+). Functionally, serine/threonine-protein kinase that plays a central role in centriole duplication. Able to trigger procentriole formation on the surface of the parental centriole cylinder, leading to the recruitment of centriole biogenesis proteins such as sass6, cpap, ccp110, cep135 and gamma-tubulin. When overexpressed, it is able to induce centrosome amplification through the simultaneous generation of multiple procentrioles adjoining each parental centriole during S phase. Its central role in centriole replication suggests a possible role in tumorigenesis, centrosome aberrations being frequently observed in tumors. Also involved in deuterosome-mediated centriole amplification in multiciliated that can generate more than 100 centrioles. This Xenopus tropicalis (Western clawed frog) protein is Serine/threonine-protein kinase PLK4.